A 353-amino-acid polypeptide reads, in one-letter code: tRNA-specific 2-thiouridylase MnmA 2 (353 aa).

ATP contacts are provided by residues 9-16 and Met-35; that span reads AMSGGVDS. Cys-98 acts as the Nucleophile in catalysis. Cysteines 98 and 194 form a disulfide. Gly-122 provides a ligand contact to ATP. The interaction with tRNA stretch occupies residues 144–146; that stretch reads KDQ. The active-site Cysteine persulfide intermediate is Cys-194. Residues 300–301 form an interaction with tRNA region; sequence RY.

This sequence belongs to the MnmA/TRMU family.

The protein localises to the cytoplasm. The enzyme catalyses S-sulfanyl-L-cysteinyl-[protein] + uridine(34) in tRNA + AH2 + ATP = 2-thiouridine(34) in tRNA + L-cysteinyl-[protein] + A + AMP + diphosphate + H(+). Catalyzes the 2-thiolation of uridine at the wobble position (U34) of tRNA, leading to the formation of s(2)U34. The protein is tRNA-specific 2-thiouridylase MnmA 2 of Clostridium botulinum (strain Loch Maree / Type A3).